Here is a 276-residue protein sequence, read N- to C-terminus: NH(3)-dependent NAD(+) synthetase (276 aa).

ATP is bound at residue 43-50 (GISGGVDS). Aspartate 49 serves as a coordination point for Mg(2+). A deamido-NAD(+)-binding site is contributed by arginine 146. Threonine 166 contributes to the ATP binding site. Glutamate 171 lines the Mg(2+) pocket. Lysine 179 and aspartate 186 together coordinate deamido-NAD(+). ATP is bound by residues lysine 195 and threonine 217. Residue 266 to 267 (HK) coordinates deamido-NAD(+).

It belongs to the NAD synthetase family. Homodimer.

The catalysed reaction is deamido-NAD(+) + NH4(+) + ATP = AMP + diphosphate + NAD(+) + H(+). It functions in the pathway cofactor biosynthesis; NAD(+) biosynthesis; NAD(+) from deamido-NAD(+) (ammonia route): step 1/1. Its function is as follows. Catalyzes the ATP-dependent amidation of deamido-NAD to form NAD. Uses ammonia as a nitrogen source. The chain is NH(3)-dependent NAD(+) synthetase from Vibrio vulnificus (strain YJ016).